The chain runs to 859 residues: Leucine--tRNA ligase (859 aa).

The 'HIGH' region signature appears at 42 to 52 (PYPSGRLHMGH). The 'KMSKS' region signature appears at 618 to 622 (KMSKS). Residue K621 coordinates ATP.

The protein belongs to the class-I aminoacyl-tRNA synthetase family.

It is found in the cytoplasm. The catalysed reaction is tRNA(Leu) + L-leucine + ATP = L-leucyl-tRNA(Leu) + AMP + diphosphate. This Shewanella baltica (strain OS155 / ATCC BAA-1091) protein is Leucine--tRNA ligase.